The chain runs to 242 residues: Biosynthetic peptidoglycan transglycosylase (242 aa).

Residues 19–39 form a helical membrane-spanning segment; sequence LMVVLAVFWGGGIALFSVAPV.

This sequence belongs to the glycosyltransferase 51 family.

Its subcellular location is the cell inner membrane. It catalyses the reaction [GlcNAc-(1-&gt;4)-Mur2Ac(oyl-L-Ala-gamma-D-Glu-L-Lys-D-Ala-D-Ala)](n)-di-trans,octa-cis-undecaprenyl diphosphate + beta-D-GlcNAc-(1-&gt;4)-Mur2Ac(oyl-L-Ala-gamma-D-Glu-L-Lys-D-Ala-D-Ala)-di-trans,octa-cis-undecaprenyl diphosphate = [GlcNAc-(1-&gt;4)-Mur2Ac(oyl-L-Ala-gamma-D-Glu-L-Lys-D-Ala-D-Ala)](n+1)-di-trans,octa-cis-undecaprenyl diphosphate + di-trans,octa-cis-undecaprenyl diphosphate + H(+). The protein operates within cell wall biogenesis; peptidoglycan biosynthesis. Its function is as follows. Peptidoglycan polymerase that catalyzes glycan chain elongation from lipid-linked precursors. The sequence is that of Biosynthetic peptidoglycan transglycosylase from Shigella dysenteriae serotype 1 (strain Sd197).